Reading from the N-terminus, the 583-residue chain is Sensor protein SrrB (583 aa).

Residues 1-11 (MMSRLNSVVIK) lie on the Cytoplasmic side of the membrane. Residues 12–32 (LWLTIILIVTTVLILLSIALI) traverse the membrane as a helical segment. Residues 33–174 (TFMQYYFTQE…SIEDTNNAIT (142 aa)) are Extracellular-facing. A helical transmembrane segment spans residues 175–195 (IITIITAVIFLTITTVFAFFL). Residues 196–583 (SSRITKPLRR…TFIIKLPKPE (388 aa)) are Cytoplasmic-facing. Residues 197–249 (SRITKPLRRLRDQATRVSEGDYSYKPSVTTKDEIGQLSQAFNQMSTEIEEHVD) enclose the HAMP domain. One can recognise a Histidine kinase domain in the interval 366 to 583 (NVSHELRTPI…TFIIKLPKPE (218 aa)). Histidine 369 bears the Phosphohistidine; by autocatalysis mark.

It is found in the cell membrane. It carries out the reaction ATP + protein L-histidine = ADP + protein N-phospho-L-histidine.. Its function is as follows. Member of the two-component regulatory system SrrA/SrrB, which is involved in the global regulation of staphylococcal virulence factors in response to environmental oxygen levels as well as biofilm formation. Also plays an essential role in host-derived nitric oxide resistance by regulating hmp/flavohemoglobin, an enzyme that detoxifies nitric oxide by converting it to nitrate. Functions as a sensor protein kinase which is autophosphorylated at a histidine residue and transfers its phosphate group to SrrA. In turn, SrrA binds to the upstream promoter regions of the target genes to positively and negatively regulate their expression. This chain is Sensor protein SrrB (srrB), found in Staphylococcus aureus (strain Mu50 / ATCC 700699).